The primary structure comprises 427 residues: GPI mannosyltransferase 2 (427 aa).

8 helical membrane passes run 7–27 (LTTV…FAPG), 119–139 (ATLL…ALTL), 164–184 (FLLA…GMLL), 197–217 (ITLA…FSVA), 247–267 (AVLF…YMHY), 318–338 (VPNF…TVYF), 350–370 (LVYI…VQII), and 404–424 (LYVN…ACFL).

Belongs to the PIGV family.

The protein localises to the endoplasmic reticulum membrane. It functions in the pathway glycolipid biosynthesis; glycosylphosphatidylinositol-anchor biosynthesis. In terms of biological role, mannosyltransferase involved in glycosylphosphatidylinositol-anchor biosynthesis. Transfers the second mannose to the glycosylphosphatidylinositol during GPI precursor assembly. In Eremothecium gossypii (strain ATCC 10895 / CBS 109.51 / FGSC 9923 / NRRL Y-1056) (Yeast), this protein is GPI mannosyltransferase 2 (GPI18).